Reading from the N-terminus, the 90-residue chain is Small ribosomal subunit protein bS20 (90 aa).

Residues 1–25 (MANSAQARKRARQAAKANSHNSALR) are disordered.

The protein belongs to the bacterial ribosomal protein bS20 family.

In terms of biological role, binds directly to 16S ribosomal RNA. The sequence is that of Small ribosomal subunit protein bS20 from Burkholderia orbicola (strain MC0-3).